A 227-amino-acid polypeptide reads, in one-letter code: Glutathione S-transferase U13 (227 aa).

A GST N-terminal domain is found at 5–86; the sequence is DTVKLIGSWS…YVDEAWPSVP (82 aa). Glutathione-binding positions include 15–16, 43–44, 57–58, and 70–71; these read SP, EK, KV, and ES. One can recognise a GST C-terminal domain in the interval 92–224; the sequence is DAYDRASARF…EVVAFAKQKF (133 aa). Position 158 is a phosphothreonine (T158).

Belongs to the GST superfamily. Tau family.

The protein localises to the cytoplasm. Its subcellular location is the cytosol. The catalysed reaction is RX + glutathione = an S-substituted glutathione + a halide anion + H(+). In vitro, possesses glutathione S-transferase activity toward 1-chloro-2,4-dinitrobenzene (CDNB) and benzyl isothiocyanate (BITC). May be involved in the conjugation of reduced glutathione to a wide number of exogenous and endogenous hydrophobic electrophiles and have a detoxification role against certain herbicides. In Arabidopsis thaliana (Mouse-ear cress), this protein is Glutathione S-transferase U13 (GSTU13).